A 466-amino-acid polypeptide reads, in one-letter code: Alpha-1A adrenergic receptor (466 aa).

Over 1 to 27 (MVLLSENASEGSNCTHPPAQVNISKAI) the chain is Extracellular. 3 N-linked (GlcNAc...) asparagine glycosylation sites follow: Asn7, Asn13, and Asn22. Residues 28–51 (LLGVILGGLIIFGVLGNILVILSV) traverse the membrane as a helical segment. The Cytoplasmic portion of the chain corresponds to 52-64 (ACHRHLHSVTHYY). A helical transmembrane segment spans residues 65–88 (IVNLAVADLLLTSTVLPFSAIFEI). Over 89 to 99 (LGYWAFGRVFC) the chain is Extracellular. Cys99 and Cys176 are disulfide-bonded. Residues 100–122 (NIWAAVDVLCCTASIMGLCIISI) traverse the membrane as a helical segment. At 123–143 (DRYIGVSYPLRYPTIVTQRRG) the chain is on the cytoplasmic side. A helical transmembrane segment spans residues 144–167 (VRALLCVWALSLVISIGPLFGWRQ). Residues 168–181 (QAPEDETICQINEE) lie on the Extracellular side of the membrane. Residues 182-205 (PGYVLFSALGSFYVPLTIILVMYC) traverse the membrane as a helical segment. At 206–273 (RVYVVAKRES…FSREKKAAKT (68 aa)) the chain is on the cytoplasmic side. Ser215 carries the phosphoserine; by PKA modification. The chain crosses the membrane as a helical span at residues 274-297 (LGIVVGCFVLCWLPFFLVMPIGSF). Topologically, residues 298–305 (FPNFKPPE) are extracellular. The chain crosses the membrane as a helical span at residues 306 to 329 (TVFKIVFWLGYLNSCINPIIYPCS). Residues 330–466 (SQEFKKAFQN…ISLGENGEEV (137 aa)) are Cytoplasmic-facing. Positions 334-349 (KKAFQNVLRIQCLRRR) match the Nuclear localization signal motif. A lipid anchor (S-palmitoyl cysteine) is attached at Cys345.

Belongs to the G-protein coupled receptor 1 family. Adrenergic receptor subfamily. ADRA1A sub-subfamily. In terms of assembly, homo- and heterooligomer. Heterooligomerizes with ADRA1B homooligomers in cardiac myocytes. Interacts with CAVIN4.

It localises to the nucleus membrane. The protein resides in the cell membrane. It is found in the cytoplasm. Its subcellular location is the membrane. The protein localises to the caveola. Its function is as follows. This alpha-adrenergic receptor mediates its action by association with G proteins that activate a phosphatidylinositol-calcium second messenger system. Its effect is mediated by G(q) and G(11) proteins. Nuclear ADRA1A-ADRA1B heterooligomers regulate phenylephrine (PE)-stimulated ERK signaling in cardiac myocytes. This is Alpha-1A adrenergic receptor (Adra1a) from Mus musculus (Mouse).